We begin with the raw amino-acid sequence, 169 residues long: Peptide deformylase (169 aa).

Fe cation is bound by residues Cys-91 and His-133. Residue Glu-134 is part of the active site. Residue His-137 coordinates Fe cation.

It belongs to the polypeptide deformylase family. It depends on Fe(2+) as a cofactor.

The catalysed reaction is N-terminal N-formyl-L-methionyl-[peptide] + H2O = N-terminal L-methionyl-[peptide] + formate. In terms of biological role, removes the formyl group from the N-terminal Met of newly synthesized proteins. Requires at least a dipeptide for an efficient rate of reaction. N-terminal L-methionine is a prerequisite for activity but the enzyme has broad specificity at other positions. The polypeptide is Peptide deformylase (Escherichia coli (strain SMS-3-5 / SECEC)).